A 959-amino-acid polypeptide reads, in one-letter code: MMS19 nucleotide excision repair protein (959 aa).

HEAT repeat units lie at residues Gln-794–Gln-828, Lys-832–Thr-871, Gln-874–Phe-915, and Leu-918–Pro-956.

This sequence belongs to the MET18/MMS19 family. As to quaternary structure, component of the CIA complex. Interacts with Xpd and galla-2. Binds to microtubules. Expressed in embryos (at protein level).

Its subcellular location is the cytoplasm. The protein resides in the cytoskeleton. The protein localises to the spindle. It localises to the nucleus. It is found in the midbody. Its function is as follows. Key component of the cytosolic iron-sulfur protein assembly (CIA) complex, a multiprotein complex that mediates the incorporation of iron-sulfur cluster into apoproteins specifically involved in DNA metabolism and genomic integrity. In the CIA complex, MMS19 acts as an adapter between early-acting CIA components and a subset of cellular target iron-sulfur proteins. Essential for diploid cell cycles, organ growth and development. Regulates mitosis by binding to Xpd and thereby competing with the Xpd-mediated repression on the Cdk-activating kinase (CAK) complex. Regulates the centrosomal localization of the MT regulator tacc, a downstream target of aurA kinase. Binds to microtubules (MT). Regulates spindle and astral MT growth, MT stability and bundling. In neuroblasts, necessary for timely and coordinated spindle assembly and orientation which is necessary for mitotic progression. In young embryos, the maternal protein is important for progression through mitosis. This is MMS19 nucleotide excision repair protein from Drosophila melanogaster (Fruit fly).